The chain runs to 226 residues: Chalcone--flavanone isomerase 1B-2 (226 aa).

Positions 50, 115, and 192 each coordinate substrate.

This sequence belongs to the chalcone isomerase family. As to expression, expressed in roots, shoots, flowers and seeds.

It carries out the reaction a chalcone = a flavanone.. Its pathway is secondary metabolite biosynthesis; flavonoid biosynthesis. In terms of biological role, catalyzes the intramolecular cyclization of bicyclic chalcones into tricyclic (S)-flavanones. Responsible for the isomerization of 4,2',4',6'-tetrahydroxychalcone (also termed chalcone) into naringenin. The polypeptide is Chalcone--flavanone isomerase 1B-2 (CHI1B2) (Glycine max (Soybean)).